The primary structure comprises 290 residues: 33 kDa chaperonin (290 aa).

Disulfide bonds link Cys-235–Cys-237 and Cys-268–Cys-271.

Belongs to the HSP33 family. Post-translationally, under oxidizing conditions two disulfide bonds are formed involving the reactive cysteines. Under reducing conditions zinc is bound to the reactive cysteines and the protein is inactive.

It is found in the cytoplasm. Its function is as follows. Redox regulated molecular chaperone. Protects both thermally unfolding and oxidatively damaged proteins from irreversible aggregation. Plays an important role in the bacterial defense system toward oxidative stress. This Streptococcus equi subsp. zooepidemicus (strain H70) protein is 33 kDa chaperonin.